We begin with the raw amino-acid sequence, 425 residues long: Serine--tRNA ligase (425 aa).

L-serine is bound at residue 235-237 (TAE). 266 to 268 (RSE) contributes to the ATP binding site. Glutamate 289 is a binding site for L-serine. An ATP-binding site is contributed by 353 to 356 (EISS). Serine 389 contacts L-serine.

It belongs to the class-II aminoacyl-tRNA synthetase family. Type-1 seryl-tRNA synthetase subfamily. In terms of assembly, homodimer. The tRNA molecule binds across the dimer.

Its subcellular location is the cytoplasm. It carries out the reaction tRNA(Ser) + L-serine + ATP = L-seryl-tRNA(Ser) + AMP + diphosphate + H(+). The catalysed reaction is tRNA(Sec) + L-serine + ATP = L-seryl-tRNA(Sec) + AMP + diphosphate + H(+). The protein operates within aminoacyl-tRNA biosynthesis; selenocysteinyl-tRNA(Sec) biosynthesis; L-seryl-tRNA(Sec) from L-serine and tRNA(Sec): step 1/1. In terms of biological role, catalyzes the attachment of serine to tRNA(Ser). Is also able to aminoacylate tRNA(Sec) with serine, to form the misacylated tRNA L-seryl-tRNA(Sec), which will be further converted into selenocysteinyl-tRNA(Sec). The chain is Serine--tRNA ligase from Desulfotalea psychrophila (strain LSv54 / DSM 12343).